The following is a 462-amino-acid chain: Histidine--tRNA ligase (462 aa).

It belongs to the class-II aminoacyl-tRNA synthetase family. In terms of assembly, homodimer.

It localises to the cytoplasm. It catalyses the reaction tRNA(His) + L-histidine + ATP = L-histidyl-tRNA(His) + AMP + diphosphate + H(+). The chain is Histidine--tRNA ligase from Trichormus variabilis (strain ATCC 29413 / PCC 7937) (Anabaena variabilis).